The chain runs to 986 residues: DNA polymerase I (986 aa).

Positions 1–303 (MFMSAKSPLL…RTFIDKIQAF (303 aa)) constitute a 5'-3' exonuclease domain. Residues 304-592 (HRNFSDNQSP…MEDRGIRIDC (289 aa)) enclose the 3'-5' exonuclease domain. The segment at 308–327 (SDNQSPVPMGNEADNGEPKK) is disordered. Residues 593–986 (DYLQTLSQQL…HRGSNWMEAK (394 aa)) form a polymerase region.

Belongs to the DNA polymerase type-A family. As to quaternary structure, single-chain monomer with multiple functions.

It catalyses the reaction DNA(n) + a 2'-deoxyribonucleoside 5'-triphosphate = DNA(n+1) + diphosphate. Functionally, in addition to polymerase activity, this DNA polymerase exhibits 3'-5' and 5'-3' exonuclease activity. This is DNA polymerase I (polA) from Synechocystis sp. (strain ATCC 27184 / PCC 6803 / Kazusa).